The primary structure comprises 196 residues: Carnitine operon protein CaiE (196 aa).

Residues 173 to 196 (TQPLRQMEENRPRLQGTTDVTPKR) form a disordered region. The span at 187 to 196 (QGTTDVTPKR) shows a compositional bias: polar residues.

It belongs to the transferase hexapeptide repeat family.

It participates in amine and polyamine metabolism; carnitine metabolism. Its function is as follows. Overproduction of CaiE stimulates the activity of CaiB and CaiD. In Shigella flexneri serotype 5b (strain 8401), this protein is Carnitine operon protein CaiE.